Consider the following 196-residue polypeptide: HTH-type transcriptional regulator BetI (196 aa).

The HTH tetR-type domain occupies 8 to 68; sequence EVRRAQLIDA…ATMRHILRDL (61 aa). A DNA-binding region (H-T-H motif) is located at residues 31–50; the sequence is TLASVAQRANISTGIVSHYF.

It participates in amine and polyamine biosynthesis; betaine biosynthesis via choline pathway [regulation]. Functionally, repressor involved in the biosynthesis of the osmoprotectant glycine betaine. It represses transcription of the choline transporter BetT and the genes of BetAB involved in the synthesis of glycine betaine. This chain is HTH-type transcriptional regulator BetI, found in Paraburkholderia phymatum (strain DSM 17167 / CIP 108236 / LMG 21445 / STM815) (Burkholderia phymatum).